Reading from the N-terminus, the 40-residue chain is Photosystem I reaction center subunit IX (40 aa).

Residues 4-24 (FFESWPMAAVLWVWLTAGIIV) form a helical membrane-spanning segment.

Belongs to the PsaJ family.

It is found in the cellular thylakoid membrane. Its function is as follows. May help in the organization of the PsaE and PsaF subunits. In Prochlorococcus marinus (strain MIT 9313), this protein is Photosystem I reaction center subunit IX.